The chain runs to 290 residues: Arylamine N-acetyltransferase 2 (290 aa).

Cys-68 acts as the Acyl-thioester intermediate in catalysis. Residues Ser-103 and Gly-104 each contribute to the CoA site. 106–107 contacts substrate; sequence IH. Residues His-107 and Asp-122 contribute to the active site. Tyr-208 is a CoA binding site.

The protein belongs to the arylamine N-acetyltransferase family.

It is found in the cytoplasm. The enzyme catalyses an arylamine + acetyl-CoA = an N-acetylarylamine + CoA. It catalyses the reaction an N-hydroxyarylamine + acetyl-CoA = an N-acetoxyarylamine + CoA. Functionally, catalyzes the N- or O-acetylation of various arylamine and heterocyclic amine substrates, and participates in the detoxification of a plethora of hydrazine and arylamine drugs. The polypeptide is Arylamine N-acetyltransferase 2 (Nat2) (Mus musculus (Mouse)).